The following is a 310-amino-acid chain: MSALSLENITGVYAPSALLVVGTFILKKEWVPFAVALAAGFVAWKLSVGGSSKPRKVLNPNEFQNFVLKEKNDISHNVTIYRFALPRPTDILGLPIGQHISLAATIEGQPKEVVRSYTPISSDNEAGYFDLLVKAYPQGNISKYLTTLKVGDTMKVRGPKGAMVYTPNMCRHIGMIAGGTGITPMLQIIKAIIRNRPRNGGNDTTQVDLIFANVNPDDILLKDELEKLAAEDDGFRIYYVLNNPPEGWTGGVGFVTPDMIKERLPAPASDIKILLCGPPPMVSAMKKATESLGYTKARPVSKLEDQVFCF.

A helical transmembrane segment spans residues 30-50 (WVPFAVALAAGFVAWKLSVGG). In terms of domain architecture, FAD-binding FR-type spans 61-166 (NEFQNFVLKE…RGPKGAMVYT (106 aa)). Residues 146–160 (TTLK…RGPK) and 172–209 (HIGM…QVDL) contribute to the FAD site.

This sequence belongs to the flavoprotein pyridine nucleotide cytochrome reductase family. Monomer. Component of the 2-(3-amino-3-carboxypropyl)histidine synthase complex composed of dph1, dph2, dph3 and a NADH-dependent reductase, predominantly cbr1. The cofactor is FAD.

The protein resides in the mitochondrion outer membrane. It catalyses the reaction 2 Fe(III)-[cytochrome b5] + NADH = 2 Fe(II)-[cytochrome b5] + NAD(+) + H(+). It carries out the reaction 2 Fe(3+)-[Dph3] + NADH = 2 Fe(2+)-[Dph3] + NAD(+) + H(+). It functions in the pathway protein modification; peptidyl-diphthamide biosynthesis. In terms of biological role, NADH-dependent reductase for dph3 and cytochrome b5. Required for the first step of diphthamide biosynthesis, a post-translational modification of histidine which occurs in elongation factor 2. Dph1 and dph2 transfer a 3-amino-3-carboxypropyl (ACP) group from S-adenosyl-L-methionine (SAM) to a histidine residue, the reaction is assisted by a reduction system comprising dph3 and a NADH-dependent reductase, predominantly cbr1. By reducing dph3, also involved in the formation of the tRNA wobble base modification mcm5s 2U (5-methoxycarbonylmethyl-2-thiouridine), mediated by the elongator complex. The cytochrome b5/NADH cytochrome b5 reductase electron transfer system supports the catalytic activity of several sterol biosynthetic enzymes. This chain is NADH-cytochrome b5 reductase 1 (cbr1), found in Emericella nidulans (strain FGSC A4 / ATCC 38163 / CBS 112.46 / NRRL 194 / M139) (Aspergillus nidulans).